The primary structure comprises 991 residues: uncharacterized protein (991 aa).

The first 17 residues, 1–17 (MLWPAALVAMFALAARA), serve as a signal peptide directing secretion. Disordered regions lie at residues 332–352 (DPLP…GETT), 392–425 (TTED…TTEG), 469–511 (EDST…EDTT), 542–569 (DTEA…TTPV), 587–641 (PAPT…NSLS), and 658–734 (ASSG…PPRI). A compositionally biased stretch (low complexity) spans 400 to 413 (TSTPTVTTVIDPTS). Positions 414 to 425 (GAVTTESRTTEG) are enriched in polar residues. Low complexity predominate over residues 472–493 (TTTARAAEYPTPTTTTVEPRPA). Residues 542-554 (DTEAAQSATSISD) are compositionally biased toward polar residues. 2 stretches are compositionally biased toward low complexity: residues 556-569 (VTPE…TTPV) and 598-615 (ASTT…SHTP). Composition is skewed to polar residues over residues 617–628 (PQESTSTPSRAP) and 658–667 (ASSGPGASTG). Low complexity predominate over residues 668-682 (ATTAPISPPWSASPA). A compositionally biased stretch (polar residues) spans 686 to 710 (VTTSAARTLEPSSTRKAVAAESTTA).

This is an uncharacterized protein from Psittacid herpesvirus 1 (isolate Amazon parrot/-/97-0001/1997) (PsHV-1).